A 44-amino-acid chain; its full sequence is Photosystem I reaction center subunit IX (44 aa).

A helical membrane pass occupies residues 7–27 (YLSVAPVLSTLWFGSLAGLLI).

It belongs to the PsaJ family.

It is found in the plastid. The protein localises to the chloroplast thylakoid membrane. Functionally, may help in the organization of the PsaE and PsaF subunits. The sequence is that of Photosystem I reaction center subunit IX from Fagopyrum esculentum subsp. ancestrale (Wild buckwheat).